Consider the following 602-residue polypeptide: UvrABC system protein C (602 aa).

Residues 15 to 100 (DQSGVYHYFD…IKQLKPKYNI (86 aa)) form the GIY-YIG domain. Residues 206–241 (SKLISRLKERMEKLAENLRFEEAGELRDRIEKIKRI) form the UVR domain.

It belongs to the UvrC family. In terms of assembly, interacts with UvrB in an incision complex.

Its subcellular location is the cytoplasm. Functionally, the UvrABC repair system catalyzes the recognition and processing of DNA lesions. UvrC both incises the 5' and 3' sides of the lesion. The N-terminal half is responsible for the 3' incision and the C-terminal half is responsible for the 5' incision. The protein is UvrABC system protein C of Wolinella succinogenes (strain ATCC 29543 / DSM 1740 / CCUG 13145 / JCM 31913 / LMG 7466 / NCTC 11488 / FDC 602W) (Vibrio succinogenes).